We begin with the raw amino-acid sequence, 162 residues long: NADH-quinone oxidoreductase subunit I (162 aa).

4Fe-4S ferredoxin-type domains follow at residues 53–83 and 93–122; these read LRRYPNGEERCIACKLCEAICPAQAITIEPE and RRYDLDMTKCIYCGLCQEACPVDAIVEGPN. Residues cysteine 63, cysteine 66, cysteine 69, cysteine 73, cysteine 102, cysteine 105, cysteine 108, and cysteine 112 each contribute to the [4Fe-4S] cluster site.

Belongs to the complex I 23 kDa subunit family. In terms of assembly, NDH-1 is composed of 14 different subunits. Subunits NuoA, H, J, K, L, M, N constitute the membrane sector of the complex. It depends on [4Fe-4S] cluster as a cofactor.

The protein localises to the cell inner membrane. It carries out the reaction a quinone + NADH + 5 H(+)(in) = a quinol + NAD(+) + 4 H(+)(out). Its function is as follows. NDH-1 shuttles electrons from NADH, via FMN and iron-sulfur (Fe-S) centers, to quinones in the respiratory chain. The immediate electron acceptor for the enzyme in this species is believed to be ubiquinone. Couples the redox reaction to proton translocation (for every two electrons transferred, four hydrogen ions are translocated across the cytoplasmic membrane), and thus conserves the redox energy in a proton gradient. This Paramagnetospirillum magneticum (strain ATCC 700264 / AMB-1) (Magnetospirillum magneticum) protein is NADH-quinone oxidoreductase subunit I.